The primary structure comprises 245 residues: Phycocyanobilin:ferredoxin oxidoreductase (245 aa).

It belongs to the HY2 family.

The enzyme catalyses (2R,3Z)-phycocyanobilin + 4 oxidized [2Fe-2S]-[ferredoxin] = biliverdin IXalpha + 4 reduced [2Fe-2S]-[ferredoxin] + 4 H(+). Catalyzes the four-electron reduction of biliverdin IX-alpha (2-electron reduction at both the A and D rings); the reaction proceeds via an isolatable 2-electron intermediate, 181,182-dihydrobiliverdin. Upon overexpression in E.coli with PCB:ferredoxin oxidoreductase, CpeS and either CpcB or PecB permits synthesis of phycocyanin-coupled CpcB or PecB. The chain is Phycocyanobilin:ferredoxin oxidoreductase (pcyA) from Nostoc sp. (strain PCC 7120 / SAG 25.82 / UTEX 2576).